Consider the following 476-residue polypeptide: Bifunctional protein HldE (476 aa).

Residues 1-318 (MKPTLPNYDQ…AEAIHGSQDS (318 aa)) form a ribokinase region. 195 to 198 (NMLE) is a binding site for ATP. D264 is a catalytic residue. Residues 344–476 (MTNGCFDILH…IIEAIKGGRG (133 aa)) are cytidylyltransferase.

The protein in the N-terminal section; belongs to the carbohydrate kinase PfkB family. It in the C-terminal section; belongs to the cytidylyltransferase family. In terms of assembly, homodimer.

The catalysed reaction is D-glycero-beta-D-manno-heptose 7-phosphate + ATP = D-glycero-beta-D-manno-heptose 1,7-bisphosphate + ADP + H(+). It catalyses the reaction D-glycero-beta-D-manno-heptose 1-phosphate + ATP + H(+) = ADP-D-glycero-beta-D-manno-heptose + diphosphate. Its pathway is nucleotide-sugar biosynthesis; ADP-L-glycero-beta-D-manno-heptose biosynthesis; ADP-L-glycero-beta-D-manno-heptose from D-glycero-beta-D-manno-heptose 7-phosphate: step 1/4. It functions in the pathway nucleotide-sugar biosynthesis; ADP-L-glycero-beta-D-manno-heptose biosynthesis; ADP-L-glycero-beta-D-manno-heptose from D-glycero-beta-D-manno-heptose 7-phosphate: step 3/4. Functionally, catalyzes the phosphorylation of D-glycero-D-manno-heptose 7-phosphate at the C-1 position to selectively form D-glycero-beta-D-manno-heptose-1,7-bisphosphate. Catalyzes the ADP transfer from ATP to D-glycero-beta-D-manno-heptose 1-phosphate, yielding ADP-D-glycero-beta-D-manno-heptose. The polypeptide is Bifunctional protein HldE (Aliivibrio salmonicida (strain LFI1238) (Vibrio salmonicida (strain LFI1238))).